Reading from the N-terminus, the 366-residue chain is Histone-lysine N-methyltransferase SETD7 (366 aa).

MORN repeat units lie at residues 36-58 (FEGN…DGST), 59-81 (LEGY…DGGV), and 106-128 (FKGQ…DGGS). One can recognise an SET domain in the interval 214–336 (ERVYVAESLI…ADEELTVAYG (123 aa)). Residues 226–228 (AGE), Asn296, His297, and Glu356 each bind S-adenosyl-L-methionine.

This sequence belongs to the class V-like SAM-binding methyltransferase superfamily. Histone-lysine methyltransferase family. SET7 subfamily. As to quaternary structure, interacts with IPF1/PDX-1. In terms of tissue distribution, widely expressed. Expressed in pancreatic islets.

It localises to the nucleus. Its subcellular location is the chromosome. It catalyses the reaction L-lysyl(4)-[histone H3] + S-adenosyl-L-methionine = N(6)-methyl-L-lysyl(4)-[histone H3] + S-adenosyl-L-homocysteine + H(+). The enzyme catalyses L-lysyl-[protein] + S-adenosyl-L-methionine = N(6)-methyl-L-lysyl-[protein] + S-adenosyl-L-homocysteine + H(+). Functionally, histone methyltransferase that specifically monomethylates 'Lys-4' of histone H3. H3 'Lys-4' methylation represents a specific tag for epigenetic transcriptional activation. Plays a central role in the transcriptional activation of genes such as collagenase or insulin. Recruited by IPF1/PDX-1 to the insulin promoter, leading to activate transcription. Also has methyltransferase activity toward non-histone proteins such as CGAS, p53/TP53, TAF10, and possibly TAF7 by recognizing and binding the [KR]-[STA]-K in substrate proteins. Monomethylates 'Lys-189' of TAF10, leading to increase the affinity of TAF10 for RNA polymerase II. Monomethylates 'Lys-372' of p53/TP53, stabilizing p53/TP53 and increasing p53/TP53-mediated transcriptional activation. Monomethylates 'Lys-491' of CGAS, promoting interaction between SGF29 and CGAS. The polypeptide is Histone-lysine N-methyltransferase SETD7 (SETD7) (Homo sapiens (Human)).